The sequence spans 263 residues: Superoxide dismutase [Fe] 3, chloroplastic (263 aa).

The transit peptide at 1–41 (MSSCVVTTSCFYTISDSSIRLKSPKLLNLSNQQRRRSLRSR) directs the protein to the chloroplast. Fe cation is bound by residues His74, His127, Asp211, and His215.

Belongs to the iron/manganese superoxide dismutase family. Homodimer. Heterodimer with FSD2. Interacts with MRL7. Fe cation is required as a cofactor.

It localises to the plastid. It is found in the chloroplast thylakoid. It catalyses the reaction 2 superoxide + 2 H(+) = H2O2 + O2. With respect to regulation, activated by cpn20/cpn21 (in vitro). Functionally, destroys superoxide anion radicals which are normally produced within the cells and which are toxic to biological systems. Plays important role in chloroplast development, particularly in the maintenance of thylakoids membranes. Seems to act as a heterodimer with FSD2. The chain is Superoxide dismutase [Fe] 3, chloroplastic from Arabidopsis thaliana (Mouse-ear cress).